Consider the following 321-residue polypeptide: o-succinylbenzoate synthase (321 aa).

The Proton donor role is filled by Lys110. Mg(2+) is bound by residues Asp138, Glu165, and Asp188. Catalysis depends on Lys212, which acts as the Proton acceptor.

Belongs to the mandelate racemase/muconate lactonizing enzyme family. MenC type 1 subfamily. A divalent metal cation serves as cofactor.

It catalyses the reaction (1R,6R)-6-hydroxy-2-succinyl-cyclohexa-2,4-diene-1-carboxylate = 2-succinylbenzoate + H2O. The protein operates within quinol/quinone metabolism; 1,4-dihydroxy-2-naphthoate biosynthesis; 1,4-dihydroxy-2-naphthoate from chorismate: step 4/7. Its pathway is quinol/quinone metabolism; menaquinone biosynthesis. Its function is as follows. Converts 2-succinyl-6-hydroxy-2,4-cyclohexadiene-1-carboxylate (SHCHC) to 2-succinylbenzoate (OSB). The sequence is that of o-succinylbenzoate synthase from Mycolicibacterium smegmatis (strain ATCC 700084 / mc(2)155) (Mycobacterium smegmatis).